The following is a 285-amino-acid chain: Nucleotide-binding protein Pmen_0867 (285 aa).

8 to 15 (GRSGSGKS) is a binding site for ATP. 60-63 (DARN) serves as a coordination point for GTP.

It belongs to the RapZ-like family.

In terms of biological role, displays ATPase and GTPase activities. The protein is Nucleotide-binding protein Pmen_0867 of Ectopseudomonas mendocina (strain ymp) (Pseudomonas mendocina).